Here is a 215-residue protein sequence, read N- to C-terminus: Superoxide dismutase [Mn] (215 aa).

Residues H27, H83, D170, and H174 each coordinate Mn(2+).

It belongs to the iron/manganese superoxide dismutase family. As to quaternary structure, homodimer. The cofactor is Mn(2+).

It catalyses the reaction 2 superoxide + 2 H(+) = H2O2 + O2. In terms of biological role, destroys superoxide anion radicals which are normally produced within the cells and which are toxic to biological systems. This Haemophilus influenzae (strain ATCC 51907 / DSM 11121 / KW20 / Rd) protein is Superoxide dismutase [Mn] (sodA).